A 424-amino-acid polypeptide reads, in one-letter code: S-inosyl-L-homocysteine hydrolase (424 aa).

D130 and E155 together coordinate substrate. 156–158 (TTT) is an NAD(+) binding site. Substrate is bound by residues K185 and D189. Residues N190, 219-224 (GYGWCG), E242, N277, 298-300 (AGH), and N346 each bind NAD(+).

This sequence belongs to the adenosylhomocysteinase family. The cofactor is NAD(+).

The protein resides in the cytoplasm. It catalyses the reaction S-inosyl-L-homocysteine + H2O = L-homocysteine + inosine. Its pathway is amino-acid biosynthesis; S-adenosyl-L-methionine biosynthesis. Its function is as follows. Catalyzes the hydrolysis of S-inosyl-L-homocysteine (SIH) to L-homocysteine (Hcy) and inosine. Likely functions in a S-adenosyl-L-methionine (SAM) recycling pathway from S-adenosyl-L-homocysteine (SAH) produced from SAM-dependent methylation reactions. Can also catalyze the reverse reaction in vitro, i.e. the synthesis of SIH from Hcy and inosine. This is S-inosyl-L-homocysteine hydrolase from Methanopyrus kandleri (strain AV19 / DSM 6324 / JCM 9639 / NBRC 100938).